We begin with the raw amino-acid sequence, 350 residues long: Anthranilate phosphoribosyltransferase (350 aa).

5-phospho-alpha-D-ribose 1-diphosphate is bound by residues G93, 96–97, T101, 103–106, 121–129, and S133; these read GD, NIST, and KHGNRSASG. G93 contributes to the anthranilate binding site. S105 lines the Mg(2+) pocket. N124 contributes to the anthranilate binding site. R179 serves as a coordination point for anthranilate. The Mg(2+) site is built by D238 and E239.

It belongs to the anthranilate phosphoribosyltransferase family. Homodimer. The cofactor is Mg(2+).

The enzyme catalyses N-(5-phospho-beta-D-ribosyl)anthranilate + diphosphate = 5-phospho-alpha-D-ribose 1-diphosphate + anthranilate. Its pathway is amino-acid biosynthesis; L-tryptophan biosynthesis; L-tryptophan from chorismate: step 2/5. Functionally, catalyzes the transfer of the phosphoribosyl group of 5-phosphorylribose-1-pyrophosphate (PRPP) to anthranilate to yield N-(5'-phosphoribosyl)-anthranilate (PRA). This Parasynechococcus marenigrum (strain WH8102) protein is Anthranilate phosphoribosyltransferase.